The sequence spans 848 residues: Heat shock protein 70 homolog lhs1 (848 aa).

Residues 1-21 form the signal peptide; that stretch reads MKRSVLTIILFFSCQFWHAFA. N-linked (GlcNAc...) asparagine glycans are attached at residues N134, N247, N359, N457, N462, N488, N555, N632, N678, N733, and N817. The interval 784-848 is disordered; it reads KLKAKKGASS…QQEIDDSDEL (65 aa). Composition is skewed to polar residues over residues 807–822 and 829–840; these read TNDI…TSTQ and ASVTQRPSSLQQ. Positions 845–848 match the Prevents secretion from ER motif; the sequence is SDEL.

The protein belongs to the heat shock protein 70 family.

The protein resides in the endoplasmic reticulum lumen. The enzyme catalyses ATP + H2O = ADP + phosphate + H(+). Functionally, chaperone required for protein translocation and folding in the endoplasmic reticulum. The polypeptide is Heat shock protein 70 homolog lhs1 (Schizosaccharomyces pombe (strain 972 / ATCC 24843) (Fission yeast)).